Here is a 349-residue protein sequence, read N- to C-terminus: Oxygen-dependent coproporphyrinogen-III oxidase (349 aa).

Disordered regions lie at residues Met1–Arg21 and Ser37–Lys60. Ser105 lines the substrate pocket. 2 residues coordinate a divalent metal cation: His109 and His119. Residue His119 is the Proton donor of the active site. Residue Asn121–Arg123 participates in substrate binding. Residues His153 and His183 each coordinate a divalent metal cation. Residues Tyr273–Glu308 are important for dimerization.

This sequence belongs to the aerobic coproporphyrinogen-III oxidase family. As to quaternary structure, homodimer. A divalent metal cation is required as a cofactor.

It localises to the cytoplasm. It catalyses the reaction coproporphyrinogen III + O2 + 2 H(+) = protoporphyrinogen IX + 2 CO2 + 2 H2O. Its pathway is porphyrin-containing compound metabolism; protoporphyrin-IX biosynthesis; protoporphyrinogen-IX from coproporphyrinogen-III (O2 route): step 1/1. Its function is as follows. Involved in the heme and chlorophyll biosynthesis. Catalyzes the aerobic oxidative decarboxylation of propionate groups of rings A and B of coproporphyrinogen-III to yield the vinyl groups in protoporphyrinogen-IX. The protein is Oxygen-dependent coproporphyrinogen-III oxidase of Prochlorococcus marinus (strain MIT 9313).